A 400-amino-acid chain; its full sequence is S-adenosylmethionine sensor upstream of mTORC1 (400 aa).

The S-adenosyl-L-methionine site is built by Arg-99, Gly-168, Asp-186, Asp-198, Phe-199, and Ser-240.

Belongs to the BMT2/SAMTOR family. Interacts with the GATOR1 complex; interaction is disrupted when samtor binds S-adenosyl-L-methionine. Interacts with the KICSTOR complex; interaction is disrupted when samtor binds S-adenosyl-L-methionine.

S-adenosyl-L-methionine-binding protein that acts as an inhibitor of mTORC1 signaling via interaction with the GATOR1 and KICSTOR complexes. Acts as a sensor of S-adenosyl-L-methionine to signal methionine sufficiency to mTORC1: in presence of methionine, binds S-adenosyl-L-methionine, leading to disrupt interaction with the GATOR1 and KICSTOR complexes and promote mTORC1 signaling. Upon methionine starvation, S-adenosyl-L-methionine levels are reduced, thereby promoting the association with GATOR1 and KICSTOR, leading to inhibit mTORC1 signaling. Probably also acts as a S-adenosyl-L-methionine-dependent methyltransferase. This is S-adenosylmethionine sensor upstream of mTORC1 from Xenopus tropicalis (Western clawed frog).